The sequence spans 91 residues: Transcriptional repressor FrmR (91 aa).

The protein belongs to the FrmR/RcnR family. Homotetramer.

The protein localises to the cytoplasm. Its function is as follows. Formaldehyde sensor. In the absence of formaldehyde, mediates repression of the frmRAB operon. Acts by binding directly to the frmRAB promoter region. In the presence of formaldehyde, it dissociates from the frmRAB promoter region and allows expression of the formaldehyde detoxification system encoded by frmA and frmB. The sequence is that of Transcriptional repressor FrmR from Escherichia coli (strain UTI89 / UPEC).